A 1829-amino-acid polypeptide reads, in one-letter code: Protein let-418 (1829 aa).

2 stretches are compositionally biased toward acidic residues: residues 1–17 and 25–39; these read MSTE…ESME and ATEE…EQGD. Disordered stretches follow at residues 1–81 and 147–198; these read MSTE…YNST and MAAQ…SDQE. Residues 48 to 63 are compositionally biased toward basic residues; that stretch reads RSSRKKGGKGGKKGSK. PHD-type zinc fingers lie at residues 256 to 303 and 317 to 365; these read NDYC…CIEH and DEFC…CETV. Chromo domains follow at residues 401-458 and 489-550; these read LKPP…PPEF and MQIH…NEDI. Positions 614–798 constitute a Helicase ATP-binding domain; the sequence is RHCWSNGTDA…FHLLNFLSKE (185 aa). An ATP-binding site is contributed by 627–634; that stretch reads DEMGLGKT. Positions 749–752 match the DEAH box motif; it reads DEAH. Residues 930–1093 form the Helicase C-terminal domain; it reads LLQKMLRKLK…GKTMSKTELD (164 aa). Disordered regions lie at residues 1168–1198, 1234–1289, 1415–1495, and 1745–1829; these read ASYQ…EPDP, SENM…MPPL, AANG…ARPS, and NGER…PMET. Acidic residues predominate over residues 1177–1186; sequence GQEEEEEEET. Polar residues-rich tracts occupy residues 1234 to 1247 and 1418 to 1427; these read SENM…QNQT and GSAQGSSRST. Over residues 1429–1444 the composition is skewed to basic and acidic residues; it reads KPKEEPKEEPMEKEDA. Residues 1446–1455 show a composition bias toward polar residues; that stretch reads ETVNGATSEP. Over residues 1474–1490 the composition is skewed to basic and acidic residues; it reads DEAKEPKEEPIETEKPR. Over residues 1749-1773 the composition is skewed to acidic residues; sequence MEEDEPVEAEEEEGVKQEPDDETQD. Over residues 1792–1811 the composition is skewed to low complexity; it reads DVPSTSAAAAVSSETAADAE. A compositionally biased stretch (acidic residues) spans 1819–1829; it reads APTDEPEPMET.

As to quaternary structure, component of the MEC (MEP-1-containing complex) complex that contains let-418, mep-1 and hda-1. Component of a NURD complex that contains let-418, hda-1, lin-40 and lin-53. Interacts with lin-1. Interacts with pie-1. Interacts with akir-1. As to expression, expressed in embryos and larva.

Its subcellular location is the nucleus. Part of a NuRD (Nucleosome Remodeling and Deacetylase) complex which is implicated in the synMuv B pathway that negatively regulates specification of vulval cell fate. This negative regulation is thought to be mediated via interaction with the promoter of lin-39, a key regulator in vulva development, and is dependent on the presence lin-1. Contributes to negative regulation of lag-2 which is expressed in the gut during larval development. Has a broad role in development. In association with akir-1, plays a role in regulating the transcription of antimicrobial peptide genes in response to fungal infection. The sequence is that of Protein let-418 from Caenorhabditis elegans.